The following is a 1392-amino-acid chain: DNA-directed RNA polymerase subunit beta'' (1392 aa).

The Zn(2+) site is built by C224, C295, C302, and C305.

It belongs to the RNA polymerase beta' chain family. RpoC2 subfamily. As to quaternary structure, in plastids the minimal PEP RNA polymerase catalytic core is composed of four subunits: alpha, beta, beta', and beta''. When a (nuclear-encoded) sigma factor is associated with the core the holoenzyme is formed, which can initiate transcription. Requires Zn(2+) as cofactor.

It localises to the plastid. The protein resides in the chloroplast. The enzyme catalyses RNA(n) + a ribonucleoside 5'-triphosphate = RNA(n+1) + diphosphate. DNA-dependent RNA polymerase catalyzes the transcription of DNA into RNA using the four ribonucleoside triphosphates as substrates. This Solanum tuberosum (Potato) protein is DNA-directed RNA polymerase subunit beta''.